A 196-amino-acid polypeptide reads, in one-letter code: Molybdenum cofactor guanylyltransferase (196 aa).

Residues Leu-10–Gly-12, Lys-23, Asn-51, Asp-69, and Asp-99 contribute to the GTP site. Asp-99 lines the Mg(2+) pocket.

This sequence belongs to the MobA family. Monomer. Mg(2+) is required as a cofactor.

Its subcellular location is the cytoplasm. The enzyme catalyses Mo-molybdopterin + GTP + H(+) = Mo-molybdopterin guanine dinucleotide + diphosphate. In terms of biological role, transfers a GMP moiety from GTP to Mo-molybdopterin (Mo-MPT) cofactor (Moco or molybdenum cofactor) to form Mo-molybdopterin guanine dinucleotide (Mo-MGD) cofactor. The chain is Molybdenum cofactor guanylyltransferase from Shewanella sediminis (strain HAW-EB3).